The sequence spans 312 residues: MNELKIVFMGSPEFALTPLKMLLAEGYDICGVYTQPDRPAGRGRELCPPPVKTLALEHGLAVYQPQSLKKPEEQAFLKELKPDVIVVAAYGLILPQAVLDIPVYGVLNIHPSLLPRYRGATPVAATLLGGDEWAGVSLMKLEAGLDTGPVYSRSMVAIRPEDTTPILADKLAFIGGCMLLELLSQIPSLPEPKVQDNTQASYFGMVTKEMGLINWQTSAVEIERRVRAFFPWPGVFTTFNQKTLKILEAKPRNLGLGLKPSEVRVYEQSRVMVGSASGELEIIRLQLEGKAGCSAADFVRGQRNFDGVNLGV.

Residue Ser-112–Pro-115 coordinates (6S)-5,6,7,8-tetrahydrofolate.

This sequence belongs to the Fmt family.

It carries out the reaction L-methionyl-tRNA(fMet) + (6R)-10-formyltetrahydrofolate = N-formyl-L-methionyl-tRNA(fMet) + (6S)-5,6,7,8-tetrahydrofolate + H(+). In terms of biological role, attaches a formyl group to the free amino group of methionyl-tRNA(fMet). The formyl group appears to play a dual role in the initiator identity of N-formylmethionyl-tRNA by promoting its recognition by IF2 and preventing the misappropriation of this tRNA by the elongation apparatus. The chain is Methionyl-tRNA formyltransferase from Dehalococcoides mccartyi (strain CBDB1).